Reading from the N-terminus, the 577-residue chain is Arginine--tRNA ligase (577 aa).

A 'HIGH' region motif is present at residues 132 to 142 (ANPTGPLHVGH).

It belongs to the class-I aminoacyl-tRNA synthetase family. Monomer.

The protein resides in the cytoplasm. The enzyme catalyses tRNA(Arg) + L-arginine + ATP = L-arginyl-tRNA(Arg) + AMP + diphosphate. In Pelagibacter ubique (strain HTCC1062), this protein is Arginine--tRNA ligase.